Consider the following 508-residue polypeptide: MADNPVLELLLRRLEVADGGLDSAELATQLGVEHQAVVGAVKSLQALGEVIEAELRSTKCWELTTEGEEIAREGSHEARVFRSIPLEGLVQSELMHLPSGKVGFSKAMSNKWIRVDKSAADGPRVFRVVDSIEDEVQKRLQLVQAGQAEKLAEKERNELRKRKLLTEVILKTYWVSKGKAFSTSVSKQEAELSPEMISSGSWRDRPFKPYNFSARGVLPDSGHLHPLLKVRSQFRQIFLEMGFTEMPTDNFIESSFWNFDALFQPQQHPARDQHDTFFLRDPAEALQLPMGYVQRVKRTHSQGGYGSQGYKYTWKLEEARKNLLRTHTTAASARALYQLAQKKPFTPAKYFSIDRVFRNETLDATHLAEFHQIEGVIADHGLTLGHLMGVLREFFTKLGITQLRFKPAYNPYTEPSMEVFSYHQGLKKWVEVGNSGVFRPEMLLPMGLPENVSVIAWGLSLERPTMIKYGINNIRELVGHKVNLQMVYDSPVCRLDIEPRSSKTQEAA.

Alanine 2 is modified (N-acetylalanine). 2 positions are modified to phosphoserine: serine 193 and serine 301. Lysine 311 carries the post-translational modification N6-acetyllysine. L-phenylalanine-binding positions include threonine 329, 372 to 374 (QIE), and tyrosine 412. Glutamate 414 is a binding site for Mg(2+). Phenylalanine 438 lines the L-phenylalanine pocket.

The protein belongs to the class-II aminoacyl-tRNA synthetase family. Phe-tRNA synthetase alpha subunit type 2 subfamily. Heterotetramer; dimer of two heterodimers formed by FARSA and FARSB. Requires Mg(2+) as cofactor.

The protein localises to the cytoplasm. It catalyses the reaction tRNA(Phe) + L-phenylalanine + ATP = L-phenylalanyl-tRNA(Phe) + AMP + diphosphate + H(+). The sequence is that of Phenylalanine--tRNA ligase alpha subunit (Farsa) from Mus musculus (Mouse).